A 270-amino-acid chain; its full sequence is Formamidopyrimidine-DNA glycosylase (270 aa).

The active-site Schiff-base intermediate with DNA is the proline 2. Glutamate 3 functions as the Proton donor in the catalytic mechanism. The Proton donor; for beta-elimination activity role is filled by lysine 58. Histidine 91, arginine 110, and lysine 151 together coordinate DNA. An FPG-type zinc finger spans residues phenylalanine 236–arginine 270. The active-site Proton donor; for delta-elimination activity is the arginine 260.

Belongs to the FPG family. As to quaternary structure, monomer. Zn(2+) serves as cofactor.

The catalysed reaction is Hydrolysis of DNA containing ring-opened 7-methylguanine residues, releasing 2,6-diamino-4-hydroxy-5-(N-methyl)formamidopyrimidine.. The enzyme catalyses 2'-deoxyribonucleotide-(2'-deoxyribose 5'-phosphate)-2'-deoxyribonucleotide-DNA = a 3'-end 2'-deoxyribonucleotide-(2,3-dehydro-2,3-deoxyribose 5'-phosphate)-DNA + a 5'-end 5'-phospho-2'-deoxyribonucleoside-DNA + H(+). Its function is as follows. Involved in base excision repair of DNA damaged by oxidation or by mutagenic agents. Acts as a DNA glycosylase that recognizes and removes damaged bases. Has a preference for oxidized purines, such as 7,8-dihydro-8-oxoguanine (8-oxoG). Has AP (apurinic/apyrimidinic) lyase activity and introduces nicks in the DNA strand. Cleaves the DNA backbone by beta-delta elimination to generate a single-strand break at the site of the removed base with both 3'- and 5'-phosphates. This is Formamidopyrimidine-DNA glycosylase from Pseudomonas savastanoi pv. phaseolicola (strain 1448A / Race 6) (Pseudomonas syringae pv. phaseolicola (strain 1448A / Race 6)).